The sequence spans 575 residues: Transcription factor coe2 (575 aa).

An interaction with DNA region spans residues 63–66; it reads RKSN. Residues 151 to 170 form a C5-type zinc finger; the sequence is CRVLLTHEVMCSRCCEKKSC. Interaction with DNA regions lie at residues 197-204 and 236-239; these read NCLKTAGN and NNSK. Residues 254–336 form the IPT/TIG domain; sequence PCIKAISPSE…CKGAPGRFIY (83 aa). A disordered region spans residues 450–487; it reads IRNTSSISPRGYSSSSTPQQSNYSTPSNSMNGYSNVPM. Over residues 454–476 the composition is skewed to low complexity; sequence SSISPRGYSSSSTPQQSNYSTPS. A compositionally biased stretch (polar residues) spans 477 to 487; the sequence is NSMNGYSNVPM.

Belongs to the COE family.

Its subcellular location is the nucleus. In terms of biological role, may play a pivotal role in the transcriptional cascade that specifies primary neurons in embryos. Stabilizes the higher neural potential of selected progenitor cells that express neurog2/X-ngnr-1 by maintaining Delta-Notch signaling. Thus ensures the transition between neural competence and irreversible commitment to a neural fate. Also promotes neuronal differentiation by activating neurod1 expression, directly or indirectly. This Xenopus tropicalis (Western clawed frog) protein is Transcription factor coe2.